The following is a 190-amino-acid chain: Biphenyl-2,3-diol 1,2-dioxygenase 2 (190 aa).

The 119-residue stretch at 6–124 (KFAHVVLQTS…DGNFVELQID (119 aa)) folds into the VOC domain. Residues His9, His72, and Glu120 each contribute to the Fe cation site.

Belongs to the extradiol ring-cleavage dioxygenase family. Homohexamer. It depends on Fe(2+) as a cofactor.

The catalysed reaction is biphenyl-2,3-diol + O2 = 2-hydroxy-6-oxo-6-phenylhexa-2,4-dienoate + H(+). Its pathway is xenobiotic degradation; biphenyl degradation; 2-hydroxy-2,4-pentadienoate and benzoate from biphenyl: step 3/4. This is Biphenyl-2,3-diol 1,2-dioxygenase 2 (bphC2) from Rhodococcus globerulus.